A 397-amino-acid polypeptide reads, in one-letter code: Elongation factor Tu (397 aa).

In terms of domain architecture, tr-type G spans 10–206; that stretch reads KPHVNIGTIG…AVDQNIPEPQ (197 aa). The G1 stretch occupies residues 19–26; it reads GHIDHGKT. Residue 19-26 participates in GTP binding; it reads GHIDHGKT. T26 is a Mg(2+) binding site. A G2 region spans residues 62–66; that stretch reads GITIS. Positions 83 to 86 are G3; sequence DCPG. GTP is bound by residues 83–87 and 138–141; these read DCPGH and NKSD. Residues 138–141 form a G4 region; it reads NKSD. The interval 176 to 178 is G5; that stretch reads SAL.

It belongs to the TRAFAC class translation factor GTPase superfamily. Classic translation factor GTPase family. EF-Tu/EF-1A subfamily. As to quaternary structure, monomer.

The protein localises to the cytoplasm. The enzyme catalyses GTP + H2O = GDP + phosphate + H(+). In terms of biological role, GTP hydrolase that promotes the GTP-dependent binding of aminoacyl-tRNA to the A-site of ribosomes during protein biosynthesis. The sequence is that of Elongation factor Tu from Thermobifida fusca (strain YX).